The primary structure comprises 245 residues: Pyridoxine 5'-phosphate synthase (245 aa).

N7 serves as a coordination point for 3-amino-2-oxopropyl phosphate. 9–10 contributes to the 1-deoxy-D-xylulose 5-phosphate binding site; sequence DH. R18 is a binding site for 3-amino-2-oxopropyl phosphate. Residue H43 is the Proton acceptor of the active site. Positions 45 and 50 each coordinate 1-deoxy-D-xylulose 5-phosphate. E70 functions as the Proton acceptor in the catalytic mechanism. T100 is a binding site for 1-deoxy-D-xylulose 5-phosphate. H190 acts as the Proton donor in catalysis. 3-amino-2-oxopropyl phosphate contacts are provided by residues G191 and 212–213; that span reads GH.

It belongs to the PNP synthase family. As to quaternary structure, homooctamer; tetramer of dimers.

It localises to the cytoplasm. The enzyme catalyses 3-amino-2-oxopropyl phosphate + 1-deoxy-D-xylulose 5-phosphate = pyridoxine 5'-phosphate + phosphate + 2 H2O + H(+). It functions in the pathway cofactor biosynthesis; pyridoxine 5'-phosphate biosynthesis; pyridoxine 5'-phosphate from D-erythrose 4-phosphate: step 5/5. Catalyzes the complicated ring closure reaction between the two acyclic compounds 1-deoxy-D-xylulose-5-phosphate (DXP) and 3-amino-2-oxopropyl phosphate (1-amino-acetone-3-phosphate or AAP) to form pyridoxine 5'-phosphate (PNP) and inorganic phosphate. In Prochlorococcus marinus (strain MIT 9303), this protein is Pyridoxine 5'-phosphate synthase.